Consider the following 36-residue polypeptide: Photosystem I reaction center subunit VIII (36 aa).

The chain crosses the membrane as a helical span at residues 8–28 (SIFVPLVGLVFPAIAIASLFL).

It belongs to the PsaI family.

The protein localises to the plastid. It is found in the chloroplast thylakoid membrane. May help in the organization of the PsaL subunit. In Jasminum nudiflorum (Winter jasmine), this protein is Photosystem I reaction center subunit VIII.